The primary structure comprises 912 residues: Protein SLFN14 (912 aa).

Residues 206–391 (ESTHVEFKRF…KVHKFKEALQ (186 aa)) are required for endoribonuclease activity. The tract at residues 392-571 (RHLFPVTQEE…QMGCEFFNLL (180 aa)) is required for ribosome binding. ATP is bound at residue 593-600 (CFPGVRKT).

It belongs to the Schlafen family. Subgroup III subfamily. In terms of assembly, associates with ribosomes in an ATP-independent manner. Mg(2+) serves as cofactor. Mn(2+) is required as a cofactor. In terms of tissue distribution, expressed in megakaryocytes and platelets (at protein level). Weakly expressed in melanocytes and malignant melanoma cells.

It localises to the nucleus. In terms of biological role, shows no ribosome-associated and endoribonuclease activities. Its function is as follows. Displays polysome-associated endoribonuclease activity towards mRNAs and rRNAs. May play a role in RNA surveillance pathways by recognizing stalled ribosomes and triggering endonucleolytic cleavage of aberrant mRNAs. Cleaves different types of rRNAs and mRNAs in a magnesium- and manganese-dependent and ATP-independent manner. Involved in correct maturation of megakaryocytes and especially important for proplatelet extension. This is Protein SLFN14 from Homo sapiens (Human).